The following is a 515-amino-acid chain: Aldehyde dehydrogenase (515 aa).

The span at 1-12 (MTVAEQQPQHQG) shows a compositional bias: polar residues. The segment at 1–20 (MTVAEQQPQHQGYANPGTPG) is disordered. An NAD(+)-binding site is contributed by 228–234 (GFGLEAG). Catalysis depends on residues glutamate 272 and cysteine 311.

This sequence belongs to the aldehyde dehydrogenase family.

It catalyses the reaction an aldehyde + NAD(+) + H2O = a carboxylate + NADH + 2 H(+). This is Aldehyde dehydrogenase (aldA) from Deinococcus radiodurans (strain ATCC 13939 / DSM 20539 / JCM 16871 / CCUG 27074 / LMG 4051 / NBRC 15346 / NCIMB 9279 / VKM B-1422 / R1).